Consider the following 184-residue polypeptide: MQHEDKTPEQQENKTPETELQQENAPATPQEAGAAGSIDDRIAELEAKLAEQQAAVLYAKAEGENIRRRAAEDIEKARKFALEKFSSELLAVKDSLDAALNVGSATLESYRDGVELTAKQLTAVFEKFSIVEINPVGEKFDPNKHQAIGTVESEAESNTVVNVLQKGYTLNDRVLRPALVMVAK.

The span at M1 to E17 shows a compositional bias: basic and acidic residues. Residues M1–D39 are disordered. A compositionally biased stretch (polar residues) spans T18 to A27.

The protein belongs to the GrpE family. Homodimer.

The protein resides in the cytoplasm. Participates actively in the response to hyperosmotic and heat shock by preventing the aggregation of stress-denatured proteins, in association with DnaK and GrpE. It is the nucleotide exchange factor for DnaK and may function as a thermosensor. Unfolded proteins bind initially to DnaJ; upon interaction with the DnaJ-bound protein, DnaK hydrolyzes its bound ATP, resulting in the formation of a stable complex. GrpE releases ADP from DnaK; ATP binding to DnaK triggers the release of the substrate protein, thus completing the reaction cycle. Several rounds of ATP-dependent interactions between DnaJ, DnaK and GrpE are required for fully efficient folding. The sequence is that of Protein GrpE from Methylobacillus flagellatus (strain ATCC 51484 / DSM 6875 / VKM B-1610 / KT).